Consider the following 297-residue polypeptide: Magnetosome protein MamB (297 aa).

Residues 1–12 (MKFENCRDCREE) are Cytoplasmic-facing. The tract at residues 1–214 (MKFENCRDCR…GLMDSSVDTE (214 aa)) is transmembrane domain (TMD). A helical membrane pass occupies residues 13–33 (VVWWAFTADICMTLFKGILGL). Residues 34–83 (MSGSVALVADSLHSGADVVASGVTQLSLKISNKPADERYPFGYGNIQYIS) lie on the Lumenal side of the membrane. The helical transmembrane segment at 84-104 (SAIVGSLLLIGASFLMYGSVV) threads the bilayer. Residues 105-112 (KLISGTYE) lie on the Cytoplasmic side of the membrane. A helical membrane pass occupies residues 113–133 (APSIFAALGASVTVIVNELMY). Residues 134 to 164 (RYQICVGNENNSPAIIANAWDNRSDAISSAA) lie on the Lumenal side of the membrane. A helical membrane pass occupies residues 165–185 (VMVGVIASVIGFPIADTIAAI). Topologically, residues 186-297 (GVSALVGHIG…PAPAAVTVRV (112 aa)) are cytoplasmic. Residues 215 to 297 (LLQTAWQIAT…PAPAAVTVRV (83 aa)) are C-terminal domain (CTD).

Belongs to the cation diffusion facilitator (CDF) transporter (TC 2.A.4) family. Forms homodimers via its C-terminal domain, may form higher order multimers that are sensitive to reducing agent. Probably interacts with MamE. Interacts with MamM via their C-terminal domains.

Its subcellular location is the cell inner membrane. It localises to the magnetosome membrane. Functionally, plays a dual, essential role in magnetosome formation; required for magnetosome vesicle formation as well as biomineralization. Requires heterodimerization with MamM for stability. Probably binds and transports iron. One of 7 genes (mamLQBIEMO) able to induce magnetosome membrane biogenesis; coexpression of mamLQRBIEMO in a deletion of the 17 gene mamAB operon restores magnetosome vesicle formation but not magnetite biosynthesis. The protein is Magnetosome protein MamB of Magnetospirillum gryphiswaldense (strain DSM 6361 / JCM 21280 / NBRC 15271 / MSR-1).